The chain runs to 227 residues: UPF0173 metal-dependent hydrolase STK_14180 (227 aa).

Belongs to the UPF0173 family.

This chain is UPF0173 metal-dependent hydrolase STK_14180, found in Sulfurisphaera tokodaii (strain DSM 16993 / JCM 10545 / NBRC 100140 / 7) (Sulfolobus tokodaii).